Reading from the N-terminus, the 796-residue chain is MFNLIRRSAEWGGKTLVLESGKIARQASGAVMVSYAGTTVLATVVTGKTKEPVDFLPLTVQFVAKSYAVGKIPGGFLKREGKPSDRETLISRLIDRSIRPLFPAGFYDEISIVCNLLSYDTVTPPEVTALVGATAALSISGVPFNGLVVGARVGYLPSEGKYLLNASADEMLCSSLDLFLSGNEDSVLMVESEASELSESQMLGAITFGHQHCQEVINLIKEFSHESGQTPIDFIPHDISSLVSDIESSYKEDFSLAYSNTIKKERVLKLEELRGKVLSEVADKYSAGDVECSDQDIVTALKTFERSLVRSKIIDTSSRIDGRAFDEIRDIEIEVDVLPKAHGSALFTRGNTQALVVTALGTPQDEQIVDDLDGDRRENFLLHYNFPPYAVGESAALRAPGRREIGHGKLAWRAIRYVLPEKSDFPYTIRVVSEITESDGSSSMATVCGASLALMDTGVPIKSPVAGIAMGLIKEDDRFIILSDILGDEDHLGDMDFKVAGTAEGVTALQMDMKISGIDIDIIEKALLQAKDGRMHILSKMNAVIQESRNRIKNHAPRIESIFINKDKIRNVIGSGGKNIRDICEKTGAKIEIIQDGTVMIYAVNNEAVEYAKSMIMDIVTEPEIGKVFEGTVVEIMKFGAFVSFLGGKKGLVHISEIRNEHISSVGSVISLNDKVKVLVIGIDREHIQLSMRRVDQESGEPIDGELYNIRKNSFSDDSCGSTGGSSFKESYNPNSRHGSHEKKRSGGSSRSSRRNSNGPNYYREDLPSSNGFGNNNRSFSNSRNGHDVPRKPRFF.

Mg(2+) is bound by residues Asp490 and Asp496. The KH domain maps to 557–616; that stretch reads PRIESIFINKDKIRNVIGSGGKNIRDICEKTGAKIEIIQDGTVMIYAVNNEAVEYAKSMI. An S1 motif domain is found at 626–693; sequence GKVFEGTVVE…DREHIQLSMR (68 aa). 3 stretches are compositionally biased toward low complexity: residues 717-728, 747-759, and 769-784; these read DDSCGSTGGSSF, GGSSRSSRRNSNG, and SSNGFGNNNRSFSNSR. The interval 717-796 is disordered; the sequence is DDSCGSTGGS…HDVPRKPRFF (80 aa). Residues 785-796 are compositionally biased toward basic and acidic residues; sequence NGHDVPRKPRFF.

It belongs to the polyribonucleotide nucleotidyltransferase family. Mg(2+) is required as a cofactor.

The protein resides in the cytoplasm. It carries out the reaction RNA(n+1) + phosphate = RNA(n) + a ribonucleoside 5'-diphosphate. Functionally, involved in mRNA degradation. Catalyzes the phosphorolysis of single-stranded polyribonucleotides processively in the 3'- to 5'-direction. In Ehrlichia chaffeensis (strain ATCC CRL-10679 / Arkansas), this protein is Polyribonucleotide nucleotidyltransferase.